The following is a 121-amino-acid chain: Large ribosomal subunit protein uL14 (121 aa).

The protein belongs to the universal ribosomal protein uL14 family. In terms of assembly, part of the 50S ribosomal subunit. Forms a cluster with proteins L3 and L19. In the 70S ribosome, L14 and L19 interact and together make contacts with the 16S rRNA in bridges B5 and B8.

Functionally, binds to 23S rRNA. Forms part of two intersubunit bridges in the 70S ribosome. The chain is Large ribosomal subunit protein uL14 from Prochlorococcus marinus (strain MIT 9211).